The following is a 102-amino-acid chain: Small ribosomal subunit protein uS17 (102 aa).

Positions 1 to 27 (MEQTEEHTDTHTDEQDEAVDRNDRKER) are disordered.

The protein belongs to the universal ribosomal protein uS17 family. In terms of assembly, part of the 30S ribosomal subunit.

Functionally, one of the primary rRNA binding proteins, it binds specifically to the 5'-end of 16S ribosomal RNA. The protein is Small ribosomal subunit protein uS17 of Salinibacter ruber (strain DSM 13855 / M31).